Consider the following 333-residue polypeptide: MSSKKKKADAEVSQTQATVEVRADVDVEELEGIGRVTGAKLKERGYYTVRDIAFASVKELAEIIGNEDRAQQIIEAARKMLGLHSFISALEVYERRKKIRRISTGVRSLDELLGGGIETRAVTEIVGEFGSGKTQLCHQLAVMVQLPEERGGLGAKAIYIDTENTFRPERIMQIAKARGLDSDQALHNIFYARAYSSDHQMILVEQAKSIIKQHNVALLVVDSVIAHFRSEFPGRENLAERQQKLNKHVADLLRLADAYDVAVVITNQVMAQPDVFFGNPLRPAGGNILAHGATYRLWLRKSKENIRIAKIFDSPYHPEGEVSFRITEEGLVD.

Residue 127–134 (GEFGSGKT) participates in ATP binding.

The protein belongs to the eukaryotic RecA-like protein family.

Involved in DNA repair and in homologous recombination. Binds and assemble on single-stranded DNA to form a nucleoprotein filament. Hydrolyzes ATP in a ssDNA-dependent manner and promotes DNA strand exchange between homologous DNA molecules. The sequence is that of DNA repair and recombination protein RadA from Pyrobaculum aerophilum (strain ATCC 51768 / DSM 7523 / JCM 9630 / CIP 104966 / NBRC 100827 / IM2).